A 559-amino-acid polypeptide reads, in one-letter code: Fanconi-associated nuclease 1 homolog (559 aa).

Residues Glu386, Asp507, Glu522, and Val523 each coordinate Mn(2+). The region spanning 443–555 (DGSYRDAIRC…MPVAVCYVRW (113 aa)) is the VRR-NUC domain.

It belongs to the FAN1 family. Mn(2+) is required as a cofactor. Mg(2+) serves as cofactor.

The enzyme catalyses Hydrolytically removes 5'-nucleotides successively from the 3'-hydroxy termini of 3'-hydroxy-terminated oligonucleotides.. In terms of biological role, nuclease required for the repair of DNA interstrand cross-links (ICL). Acts as a 5'-3' exonuclease that anchors at a cut end of DNA and cleaves DNA successively at every third nucleotide, allowing to excise an ICL from one strand through flanking incisions. Also has endonuclease activity toward 5'-flaps. This chain is Fanconi-associated nuclease 1 homolog, found in Pseudomonas aeruginosa (strain ATCC 15692 / DSM 22644 / CIP 104116 / JCM 14847 / LMG 12228 / 1C / PRS 101 / PAO1).